Here is a 477-residue protein sequence, read N- to C-terminus: MSRAAVPSVRRRLLVNLLVGFVLCWLSVAALTYHLSLKQVNRLFDDDMVDFGEAALRLLDLATEDQAGEDGSITEIIERSREAIQGLPLLRRESALGYALWRDGQPLLSSLNLPPEITAQGPGFSTVEAQGTHWRVLQLNIDGFQIWISENLIYRQHTMNLLLFYSLFPLLLALPLLGGLVWFGVARGLAPLREVQAEVQQRSARHLQPIAVEAVPLEIRGLIDELNLLLERLRTALEAERRLTSDAAHEIRTPLASLRTHAQVALRSEDPKAHARGLLQVSRSVERISTLMEQILLLARLDGDALLEQFHPVNLATLAEDVLSELARQAIDKDIELSLHQETVYVMGIDLWLKAMVGNLVGNALRYTPAGGQVEIRVENRAQHAVLRVRDNGPGVALEEQQAIFTRFYRSPATSSGEGSGLGLPIVKRIVELHFGSIGLGKGLEGKGLEVQVFLPKTQPDATRPPARGPDSGRSHI.

The next 2 helical transmembrane spans lie at Leu13–Tyr33 and Leu161–Val181. Residues Ala186 to Glu238 form the HAMP domain. Positions Asp246–Gln459 constitute a Histidine kinase domain. His249 is subject to Phosphohistidine; by autocatalysis. The segment at Leu455–Ile477 is disordered.

Its subcellular location is the membrane. The enzyme catalyses ATP + protein L-histidine = ADP + protein N-phospho-L-histidine.. Functionally, member of the two-component regulatory system PmrA/PmrB that plays a role in the regulation of resistance towards polymyxin B and cationic antimicrobial peptides in response to limiting concentrations of Mg(2+). Also autoregulates its own pmrAB operon under Mg(2+)-limiting conditions. May function as a membrane-associated protein kinase that phosphorylates PmrA in response to environmental signals leading to activation of specific gene promoters. The protein is Sensor protein kinase PmrB (pmrB) of Pseudomonas aeruginosa (strain ATCC 15692 / DSM 22644 / CIP 104116 / JCM 14847 / LMG 12228 / 1C / PRS 101 / PAO1).